Here is a 757-residue protein sequence, read N- to C-terminus: MDVNPTLLFLKVPAQNAISTTFPYTGDPPYSHGTGTGYTMDTVNRTHQYSEKGKWTTNTETGAPQLNPIDGPLPEDNEPSGYAQTDCVLEAMAFLEESHPGIFENSCLETMEVVQQTRVDKLTQGRQTYDWTLNRNQPAATALANTIEVFRSNGLTANESGRLIDFLKDVMESMDKEEMEITTHFQRKRRVRDNMTKKMVTQRTIGKKKQRVNKRSYLIRALTLNTMTKDAERGKLKRRAIATPGMQIRGFVYFVETLARSICEKLEQSGLPVGGNEKKAKLANVVRKMMTNSQDTELSFTITGDNTKWNENQNPRMFLAMITYITKNQPEWFRNILSIAPIMFSNKMARLGKGYMFESKRMKLRTQIPAEMLASIDLKYFNESTRKKIEKIRPLLIDGTASLSPGMMMGMFNMLSTVLGVSILNLGQKKYTKTTYWWDGLQSSDDFALIVNAPNHEGIQAGVDRFYRTCKLVGINMSKKKSYINRTGTFEFTSFFYRYGFVANFSMELPSFGVSGINESADMSIGVTVIKNNMINNDLGPATAQMALQLFIKDYRYTYRCHRGDTQIQTRRSFELKKLWEQTRSKAGLLVSDGGPNLYNIRNLHIPEVCLKWELMDEDYQGRLCNPLNPFVSHKEIESVNNAVIMPAHGPAKSMEYDAVATTHSWIPKRNRSILNTSQRGILEDEQMYQKCCNLFEKFFPSSSYRRPVGISSMVEAMVSRARIDARIDFESGRIKKEEFSEIMKICFTIEELRRQK.

Residues 50–82 (SEKGKWTTNTETGAPQLNPIDGPLPEDNEPSGY) are disordered. The segment covering 55–64 (WTTNTETGAP) has biased composition (polar residues). Short sequence motifs (nuclear localization signal) lie at residues 187–195 (RKRRVRDNM) and 203–216 (RTIG…NKRS). The tract at residues 249-256 (RGFVYFVE) is promoter-binding site. Residues 286–483 (VRKMMTNSQD…GINMSKKKSY (198 aa)) form the RdRp catalytic domain.

Belongs to the influenza viruses polymerase PB1 family. In terms of assembly, influenza RNA polymerase is composed of three subunits: PB1, PB2 and PA. Interacts (via N-terminus) with PA (via C-terminus). Interacts (via C-terminus) with PB2 (via N-terminus); this interaction is essential for transcription initiation. In terms of processing, phosphorylated by host PRKCA.

Its subcellular location is the host nucleus. It localises to the host cytoplasm. It catalyses the reaction RNA(n) + a ribonucleoside 5'-triphosphate = RNA(n+1) + diphosphate. Its function is as follows. RNA-dependent RNA polymerase which is responsible for replication and transcription of virus RNA segments. The transcription of viral mRNAs occurs by a unique mechanism called cap-snatching. 5' methylated caps of cellular mRNAs are cleaved after 10-13 nucleotides by PA. In turn, these short capped RNAs are used as primers by PB1 for transcription of viral mRNAs. During virus replication, PB1 initiates RNA synthesis and copy vRNA into complementary RNA (cRNA) which in turn serves as a template for the production of more vRNAs. In Influenza A virus (strain A/Memphis/110/1976 H3N2), this protein is RNA-directed RNA polymerase catalytic subunit.